Consider the following 234-residue polypeptide: 2-C-methyl-D-erythritol 4-phosphate cytidylyltransferase (234 aa).

It belongs to the IspD/TarI cytidylyltransferase family. IspD subfamily.

The catalysed reaction is 2-C-methyl-D-erythritol 4-phosphate + CTP + H(+) = 4-CDP-2-C-methyl-D-erythritol + diphosphate. It functions in the pathway isoprenoid biosynthesis; isopentenyl diphosphate biosynthesis via DXP pathway; isopentenyl diphosphate from 1-deoxy-D-xylulose 5-phosphate: step 2/6. Its function is as follows. Catalyzes the formation of 4-diphosphocytidyl-2-C-methyl-D-erythritol from CTP and 2-C-methyl-D-erythritol 4-phosphate (MEP). The chain is 2-C-methyl-D-erythritol 4-phosphate cytidylyltransferase from Photobacterium profundum (strain SS9).